The primary structure comprises 178 residues: Ribosome maturation factor RimP (178 aa).

This sequence belongs to the RimP family.

It localises to the cytoplasm. In terms of biological role, required for maturation of 30S ribosomal subunits. The chain is Ribosome maturation factor RimP from Mycolicibacterium paratuberculosis (strain ATCC BAA-968 / K-10) (Mycobacterium paratuberculosis).